The chain runs to 351 residues: Delta(7)-sterol 5(6)-desaturase (351 aa).

3 helical membrane passes run 88-108, 136-156, and 173-193; these read LSLF…VASF, GLGA…LELH, and VRLA…IYLL. In terms of domain architecture, Fatty acid hydroxylase spans 180-305; the sequence is LFFILFTDFG…FTTLWDRLGG (126 aa). The short motif at 194-198 is the Histidine box-1 element; the sequence is HRWLH. The Histidine box-2 signature appears at 207-211; that stretch reads HKKHH. The chain crosses the membrane as a helical span at residues 237-257; that stretch reads HLFPMLFPLHKVSYLVLFTFV. A Histidine box-3 motif is present at residues 282 to 286; that stretch reads HTVHH.

This sequence belongs to the sterol desaturase family. Fe cation is required as a cofactor.

It localises to the endoplasmic reticulum membrane. The catalysed reaction is a Delta(7)-sterol + 2 Fe(II)-[cytochrome b5] + O2 + 2 H(+) = a Delta(5),Delta(7)-sterol + 2 Fe(III)-[cytochrome b5] + 2 H2O. It participates in steroid metabolism; ergosterol biosynthesis; ergosterol from zymosterol: step 3/5. Catalyzes the introduction of a C-5 double bond in the B ring of ergosterol. May contribute to the regulation of ergosterol biosynthesis. The protein is Delta(7)-sterol 5(6)-desaturase (ERG3) of Eremothecium gossypii (strain ATCC 10895 / CBS 109.51 / FGSC 9923 / NRRL Y-1056) (Yeast).